The primary structure comprises 297 residues: uncharacterized protein (297 aa).

7 WD repeats span residues 12–51, 54–93, 96–135, 140–177, 179–217, 222–261, and 265–297; these read KAKEPINVVKYNRTGKYVLAAGNERVVRLWNVKSGACIHE, GHGHEILDLDLVYDSTKFASCGGDKFIQVWDVNTGKVDRR, GHLAQINTIRYNEDSSILASGSFDSKVRLWDCRSNSFSPI, DAKDSVSSIDIAEHLIVTGSTDGTLRTYDIRKGTLSSD, FSHPITSVKTSKSASFSLISSLNSSIHLLDQETGKILKS, KNMEYRVRSSFNQSETIVFSGSEDGKVYLWDLENETQITS, and VGTPIVTDISCHPTMDDFIIATVHGDLFIYQYN.

Belongs to the WD repeat MORG1 family.

The protein resides in the cytoplasm. It localises to the nucleus. This is an uncharacterized protein from Schizosaccharomyces pombe (strain 972 / ATCC 24843) (Fission yeast).